A 128-amino-acid polypeptide reads, in one-letter code: 3-aminoacrylate deaminase RutC (128 aa).

The protein belongs to the RutC family.

The catalysed reaction is (Z)-3-aminoacrylate + H2O + H(+) = 3-oxopropanoate + NH4(+). Involved in pyrimidine catabolism. Catalyzes the deamination of 3-aminoacrylate to malonic semialdehyde, a reaction that can also occur spontaneously. RutC may facilitate the reaction and modulate the metabolic fitness, rather than catalyzing essential functions. The polypeptide is 3-aminoacrylate deaminase RutC (Azorhizobium caulinodans (strain ATCC 43989 / DSM 5975 / JCM 20966 / LMG 6465 / NBRC 14845 / NCIMB 13405 / ORS 571)).